A 104-amino-acid chain; its full sequence is Large ribosomal subunit protein bL21 (104 aa).

Residues 78–91 show a composition bias toward basic residues; the sequence is KRRRQNSRRKRGHR. A disordered region spans residues 78–104; sequence KRRRQNSRRKRGHRQDHTVVRITGISA.

This sequence belongs to the bacterial ribosomal protein bL21 family. In terms of assembly, part of the 50S ribosomal subunit. Contacts protein L20.

This protein binds to 23S rRNA in the presence of protein L20. In Methylobacterium radiotolerans (strain ATCC 27329 / DSM 1819 / JCM 2831 / NBRC 15690 / NCIMB 10815 / 0-1), this protein is Large ribosomal subunit protein bL21.